Consider the following 754-residue polypeptide: Leucine-rich repeat-containing protein 36 (754 aa).

LRR repeat units follow at residues 51-72 (NLRS…QYLC) and 73-94 (SLQD…SRLQ). The 40-residue stretch at 107–146 (NPVVRKDTDYRLFAVYTLQTLEKLDDRTVREGERKAAKLH) folds into the LRRCT domain. The span at 241–255 (REMPSDNHQEDEFRH) shows a compositional bias: basic and acidic residues. The segment at 241–270 (REMPSDNHQEDEFRHYSPRQSTVRSPEKMT) is disordered. The stretch at 600–680 (NDMESLKQKL…EKTVAILHES (81 aa)) forms a coiled coil. The disordered stretch occupies residues 702–734 (YSGKALLPPEKGHHLGRSSPFGKSTLSSSSPVA). Positions 722–732 (FGKSTLSSSSP) are enriched in polar residues.

The chain is Leucine-rich repeat-containing protein 36 (LRRC36) from Homo sapiens (Human).